Here is a 137-residue protein sequence, read N- to C-terminus: Large ribosomal subunit protein uL16 (137 aa).

The protein belongs to the universal ribosomal protein uL16 family. Part of the 50S ribosomal subunit.

In terms of biological role, binds 23S rRNA and is also seen to make contacts with the A and possibly P site tRNAs. The polypeptide is Large ribosomal subunit protein uL16 (Cellvibrio japonicus (strain Ueda107) (Pseudomonas fluorescens subsp. cellulosa)).